A 231-amino-acid polypeptide reads, in one-letter code: Phosphoheptose isomerase (231 aa).

The SIS domain occupies 35 to 190 (LAAVLGGGGR…CAAFDAALER (156 aa)). 50 to 52 (NGG) provides a ligand contact to substrate. Histidine 59 and glutamate 63 together coordinate Zn(2+). Residues glutamate 63, 92–93 (ND), 118–120 (STS), serine 123, and glutamine 170 contribute to the substrate site. The Zn(2+) site is built by glutamine 170 and histidine 178. Composition is skewed to low complexity over residues 197–206 (AAGSAASTGR) and 214–225 (ASTGRAAGAGRA). Residues 197-231 (AAGSAASTGRAARRERAASTGRAAGAGRAAQRKRR) form a disordered region.

It belongs to the SIS family. GmhA subfamily. Zn(2+) serves as cofactor.

The protein localises to the cytoplasm. The enzyme catalyses 2 D-sedoheptulose 7-phosphate = D-glycero-alpha-D-manno-heptose 7-phosphate + D-glycero-beta-D-manno-heptose 7-phosphate. It participates in carbohydrate biosynthesis; D-glycero-D-manno-heptose 7-phosphate biosynthesis; D-glycero-alpha-D-manno-heptose 7-phosphate and D-glycero-beta-D-manno-heptose 7-phosphate from sedoheptulose 7-phosphate: step 1/1. Catalyzes the isomerization of sedoheptulose 7-phosphate in D-glycero-D-manno-heptose 7-phosphate. This Streptomyces coelicolor (strain ATCC BAA-471 / A3(2) / M145) protein is Phosphoheptose isomerase.